Here is a 221-residue protein sequence, read N- to C-terminus: Ribosomal RNA small subunit methyltransferase G 3 (221 aa).

S-adenosyl-L-methionine-binding positions include Gly85, Phe90, 136-137 (IE), and Arg150.

Belongs to the methyltransferase superfamily. RNA methyltransferase RsmG family.

The protein localises to the cytoplasm. The catalysed reaction is guanosine(527) in 16S rRNA + S-adenosyl-L-methionine = N(7)-methylguanosine(527) in 16S rRNA + S-adenosyl-L-homocysteine. Functionally, specifically methylates the N7 position of guanine in position 527 of 16S rRNA. The polypeptide is Ribosomal RNA small subunit methyltransferase G 3 (Bdellovibrio bacteriovorus (strain ATCC 15356 / DSM 50701 / NCIMB 9529 / HD100)).